The primary structure comprises 689 residues: DNA-directed RNA polymerase subunit beta' (689 aa).

Residues cysteine 69, cysteine 71, cysteine 87, and cysteine 90 each contribute to the Zn(2+) site. Mg(2+)-binding residues include aspartate 489, aspartate 491, and aspartate 493.

This sequence belongs to the RNA polymerase beta' chain family. RpoC1 subfamily. In terms of assembly, in plastids the minimal PEP RNA polymerase catalytic core is composed of four subunits: alpha, beta, beta', and beta''. When a (nuclear-encoded) sigma factor is associated with the core the holoenzyme is formed, which can initiate transcription. Mg(2+) is required as a cofactor. Requires Zn(2+) as cofactor.

Its subcellular location is the plastid. It is found in the chloroplast. It carries out the reaction RNA(n) + a ribonucleoside 5'-triphosphate = RNA(n+1) + diphosphate. Functionally, DNA-dependent RNA polymerase catalyzes the transcription of DNA into RNA using the four ribonucleoside triphosphates as substrates. The chain is DNA-directed RNA polymerase subunit beta' from Lactuca sativa (Garden lettuce).